The primary structure comprises 444 residues: Ribosomal protein uS12 methylthiotransferase RimO (444 aa).

Residues 1 to 117 (MKVGIISLGC…ITEVISSALK (117 aa)) form the MTTase N-terminal domain. 6 residues coordinate [4Fe-4S] cluster: Cys10, Cys46, Cys80, Cys154, Cys158, and Cys161. The region spanning 140–370 (YQPGPSAYIK…WEVQKEITRK (231 aa)) is the Radical SAM core domain. Positions 373–441 (EGLVGTEMRV…DYDLIGEMTN (69 aa)) constitute a TRAM domain.

Belongs to the methylthiotransferase family. RimO subfamily. [4Fe-4S] cluster serves as cofactor.

It localises to the cytoplasm. The catalysed reaction is L-aspartate(89)-[ribosomal protein uS12]-hydrogen + (sulfur carrier)-SH + AH2 + 2 S-adenosyl-L-methionine = 3-methylsulfanyl-L-aspartate(89)-[ribosomal protein uS12]-hydrogen + (sulfur carrier)-H + 5'-deoxyadenosine + L-methionine + A + S-adenosyl-L-homocysteine + 2 H(+). Catalyzes the methylthiolation of an aspartic acid residue of ribosomal protein uS12. The chain is Ribosomal protein uS12 methylthiotransferase RimO from Natranaerobius thermophilus (strain ATCC BAA-1301 / DSM 18059 / JW/NM-WN-LF).